Here is a 215-residue protein sequence, read N- to C-terminus: Vesicle transport protein SFT2C (215 aa).

The Cytoplasmic portion of the chain corresponds to 1 to 82 (MADLHRQLQE…RGQRLAAGGG (82 aa)). The helical transmembrane segment at 83–103 (CLLLAALCFGLAALYAPVLLL) threads the bilayer. The Lumenal portion of the chain corresponds to 104–107 (RARK). Residues 108 to 128 (FALLWSLGSALALAGSALLRG) form a helical membrane-spanning segment. Over 129-142 (GAACGRLLRCEEAP) the chain is Cytoplasmic. Residues 143-163 (SRPALLYMAALGATLFAALGL) traverse the membrane as a helical segment. At 164–166 (RST) the chain is on the lumenal side. A helical membrane pass occupies residues 167 to 187 (LLTVLGAGAQVAALLAALVGL). Residues 188 to 215 (LPWGGGTALRLALGRLGRGAGLAKVLPV) are Cytoplasmic-facing.

Belongs to the SFT2 family.

It is found in the membrane. Functionally, may be involved in fusion of retrograde transport vesicles derived from an endocytic compartment with the Golgi complex. The sequence is that of Vesicle transport protein SFT2C from Homo sapiens (Human).